A 300-amino-acid chain; its full sequence is DNA packaging protein OPG160 (300 aa).

The protein belongs to the orthopoxvirus OPG160 protein family. Interacts with protein OPG137.

In terms of biological role, participates in viral DNA packaging and virion morphogenesis. In Monkeypox virus, this protein is DNA packaging protein OPG160 (OPG160).